A 595-amino-acid chain; its full sequence is P2X purinoceptor 7 (595 aa).

At 1-22 the chain is on the cytoplasmic side; the sequence is MPACCSWNDVLQYETNKVTRIQ. A lipid anchor (S-palmitoyl cysteine) is attached at Cys-4. Residues 23 to 46 traverse the membrane as a helical segment; the sequence is STNYGTVKWVLHMIVFSYISFALV. Residues 47–328 lie on the Extracellular side of the membrane; it reads SDKLYQRKEP…ILVFGTGGKF (282 aa). Asn-74 carries an N-linked (GlcNAc...) asparagine glycan. 3 cysteine pairs are disulfide-bonded: Cys-119–Cys-168, Cys-129–Cys-152, and Cys-135–Cys-162. ADP-ribosylarginine; by ART2B occurs at positions 125 and 133. Asn-187 is a glycosylation site (N-linked (GlcNAc...) asparagine). Thr-189 lines the ATP pocket. 2 N-linked (GlcNAc...) asparagine glycosylation sites follow: Asn-202 and Asn-213. A disulfide bridge connects residues Cys-216 and Cys-226. N-linked (GlcNAc...) asparagine glycosylation occurs at Asn-241. The cysteines at positions 260 and 269 are disulfide-linked. Arg-294 and Lys-311 together coordinate ATP. The helical transmembrane segment at 329-353 threads the bilayer; that stretch reads DIIQLVVYIGSTLSYFGLATVCIDL. Ser-342 contributes to the Na(+) binding site. At 354–595 the chain is on the cytoplasmic side; that stretch reads LINTYSSAFC…GQYSGFKYPY (242 aa). Residues 360–377 form a C-cys anchor region; it reads SAFCRSGVYPYCKCCEPC. 3 S-palmitoyl cysteine lipidation sites follow: Cys-363, Cys-374, and Cys-377. Ser-390 is modified (phosphoserine). Positions 395–595 are cytoplasmic ballast; it reads KPTLKYVSFV…GQYSGFKYPY (201 aa). Zn(2+) is bound by residues Cys-479, Cys-499, and Cys-506. GTP is bound by residues Arg-546, His-547, Tyr-550, and Ala-567. Cys-572 contributes to the Zn(2+) binding site. The GTP site is built by Lys-583, Ser-589, and Gly-590.

The protein belongs to the P2X receptor family. Homotrimers. Interacts with LAMA3, ITGB2, ACTB, ACTN4, SVIL, MPP3, HSPA1, HSPCB, HSPA8, PIK230 and PTPRB. Interacts (via C-terminus) with EMP2. In terms of processing, phosphorylation results in its inactivation. ADP-ribosylation at Arg-125 is necessary and sufficient to activate P2RX7 and gate the channel. Post-translationally, palmitoylation of several cysteines in the C-terminal cytoplasmic tail is required for efficient localization to cell surface. Palmitoylation prevents channel desensitization by physically anchoring the palmitoylated groups to the membrane.

The protein resides in the cell membrane. The enzyme catalyses Ca(2+)(in) = Ca(2+)(out). It catalyses the reaction K(+)(in) = K(+)(out). It carries out the reaction Na(+)(in) = Na(+)(out). Its activity is regulated as follows. Activated by high extracellular ATP levels (0.1-2.5 mM). The synthetic analog 2'(3')-O-(4-benzoylbenzoyl)ATP (BzATP) acts as a potent agonist. Does not undergo desensitization, instead, undergoes a facilitation process where currents progressively increase with repetitive or prolonged agonist application. Palmitoylation prevents channel desensitization. The permeability of the P2RX7 channel is modulated by the amount of cholesterol in the plasma membrane. ATP-gated nonselective transmembrane cation channel. Requires high millimolar-range concentrations of ATP to become activated. ATP binding trigers the rapid opening of the channel and allows Na(+) and Ca(2+) influx and K(+) efflux. Has also the ability to form a large pore in the cell membrane, allowing the passage of large cationic molecules. In microglia, may mediate NADPH transport across the plasma membrane. In immune cells, P2RX7 acts as a molecular sensor in pathological inflammatory states by detecting and responding to high local concentrations of extracellar ATP. In microglial cells, P2RX7 activation leads to the release of pro-inflammatory cytokines, such as IL-1beta and IL-18, through the activation of the NLRP3 inflammasome and caspase-1. Cooperates with KCNK6 to activate NLRP3 inflammasome. Activates death pathways leading to apoptosis and autophagy. Activates death pathways leading to pyroptosis. The protein is P2X purinoceptor 7 (P2rx7) of Mus musculus (Mouse).